A 133-amino-acid chain; its full sequence is Protein Ac75 (133 aa).

In terms of assembly, interacts with protein Ac76.

The protein localises to the virion. Its subcellular location is the host cytoplasm. It is found in the host nucleus. Functionally, plays a role in nuclear egress of nucleocapsids and intranuclear microvesicle formation. This chain is Protein Ac75 (Ac75), found in Lepidoptera (butterflies and moths).